The chain runs to 221 residues: Pyridoxine/pyridoxamine 5'-phosphate oxidase (221 aa).

Substrate is bound by residues 14–17 and lysine 73; that span reads RNEY. Residues 68–73, 83–84, lysine 90, and glutamine 112 each bind FMN; these read RTVLLK and FT. Substrate contacts are provided by tyrosine 130, arginine 134, and serine 138. Residues 147 to 148 and tryptophan 193 contribute to the FMN site; that span reads QS. 199–201 lines the substrate pocket; sequence RLH. Arginine 203 contacts FMN.

It belongs to the pyridoxamine 5'-phosphate oxidase family. As to quaternary structure, homodimer. It depends on FMN as a cofactor.

The enzyme catalyses pyridoxamine 5'-phosphate + O2 + H2O = pyridoxal 5'-phosphate + H2O2 + NH4(+). It catalyses the reaction pyridoxine 5'-phosphate + O2 = pyridoxal 5'-phosphate + H2O2. It functions in the pathway cofactor metabolism; pyridoxal 5'-phosphate salvage; pyridoxal 5'-phosphate from pyridoxamine 5'-phosphate: step 1/1. The protein operates within cofactor metabolism; pyridoxal 5'-phosphate salvage; pyridoxal 5'-phosphate from pyridoxine 5'-phosphate: step 1/1. In terms of biological role, catalyzes the oxidation of either pyridoxine 5'-phosphate (PNP) or pyridoxamine 5'-phosphate (PMP) into pyridoxal 5'-phosphate (PLP). The chain is Pyridoxine/pyridoxamine 5'-phosphate oxidase from Salinispora arenicola (strain CNS-205).